The chain runs to 192 residues: Putative manganese efflux pump MntP (192 aa).

The next 6 helical transmembrane spans lie at 3-23 (FSAI…VAAA), 36-56 (VLLV…IGWL), 65-85 (VQAW…GKML), 112-132 (FVLA…LPML), 136-156 (FAIS…AGLF), and 171-191 (LAGG…HLVL).

Belongs to the MntP (TC 9.B.29) family.

The protein resides in the cell inner membrane. Functionally, probably functions as a manganese efflux pump. This Sorangium cellulosum (strain So ce56) (Polyangium cellulosum (strain So ce56)) protein is Putative manganese efflux pump MntP.